A 126-amino-acid chain; its full sequence is Methylglyoxal synthase (126 aa).

In terms of domain architecture, MGS-like spans 1–126; sequence MEKKIALIAH…LIKGLESLIF (126 aa). Residues His10, Lys14, 36-39, and 56-57 contribute to the substrate site; these read TGTT and SG. The Proton donor/acceptor role is filled by Asp62. His89 provides a ligand contact to substrate.

Belongs to the methylglyoxal synthase family.

The catalysed reaction is dihydroxyacetone phosphate = methylglyoxal + phosphate. Its function is as follows. Catalyzes the formation of methylglyoxal from dihydroxyacetone phosphate. The chain is Methylglyoxal synthase from Borreliella burgdorferi (strain ATCC 35210 / DSM 4680 / CIP 102532 / B31) (Borrelia burgdorferi).